The chain runs to 225 residues: UPF0758 protein Shewmr4_3597 (225 aa).

The MPN domain occupies 102–224 (VLTNPDLTRD…IVSFAERGWI (123 aa)). The Zn(2+) site is built by His-173, His-175, and Asp-186. Positions 173–186 (HNHPSGIAEPSQAD) match the JAMM motif motif.

This sequence belongs to the UPF0758 family.

This chain is UPF0758 protein Shewmr4_3597, found in Shewanella sp. (strain MR-4).